A 169-amino-acid chain; its full sequence is Peptide methionine sulfoxide reductase MsrA (169 aa).

Cys-13 is an active-site residue.

The protein belongs to the MsrA Met sulfoxide reductase family.

The catalysed reaction is L-methionyl-[protein] + [thioredoxin]-disulfide + H2O = L-methionyl-(S)-S-oxide-[protein] + [thioredoxin]-dithiol. It carries out the reaction [thioredoxin]-disulfide + L-methionine + H2O = L-methionine (S)-S-oxide + [thioredoxin]-dithiol. In terms of biological role, has an important function as a repair enzyme for proteins that have been inactivated by oxidation. Catalyzes the reversible oxidation-reduction of methionine sulfoxide in proteins to methionine. This is Peptide methionine sulfoxide reductase MsrA from Mycolicibacterium vanbaalenii (strain DSM 7251 / JCM 13017 / BCRC 16820 / KCTC 9966 / NRRL B-24157 / PYR-1) (Mycobacterium vanbaalenii).